The chain runs to 78 residues: Defensin-like protein 308 (78 aa).

A signal peptide spans Met1–Ser19. 3 cysteine pairs are disulfide-bonded: Cys31-Cys50, Cys37-Cys55, and Cys41-Cys57.

This sequence belongs to the DEFL family.

Its subcellular location is the secreted. This is Defensin-like protein 308 from Arabidopsis thaliana (Mouse-ear cress).